The following is a 105-amino-acid chain: UPF0235 protein RAF_ORF1191 (105 aa).

Belongs to the UPF0235 family.

In Rickettsia africae (strain ESF-5), this protein is UPF0235 protein RAF_ORF1191.